We begin with the raw amino-acid sequence, 178 residues long: Large ribosomal subunit protein uL6 (178 aa).

Belongs to the universal ribosomal protein uL6 family. As to quaternary structure, part of the 50S ribosomal subunit.

This protein binds to the 23S rRNA, and is important in its secondary structure. It is located near the subunit interface in the base of the L7/L12 stalk, and near the tRNA binding site of the peptidyltransferase center. This chain is Large ribosomal subunit protein uL6, found in Clavibacter sepedonicus (Clavibacter michiganensis subsp. sepedonicus).